Here is a 572-residue protein sequence, read N- to C-terminus: Acetyl-coenzyme A synthetase (572 aa).

T260 contacts CoA. Residues 333–335 (GEP), 354–359 (DTWWMT), D440, and R455 each bind ATP. S463 is a CoA binding site. Residue R466 participates in ATP binding. Mg(2+) contacts are provided by V477, H479, and I482. K524 contributes to the CoA binding site. K549 is subject to N6-acetyllysine.

It belongs to the ATP-dependent AMP-binding enzyme family. As to quaternary structure, interacts with FloT. Mg(2+) is required as a cofactor. Acetylated. Deacetylation by the SIR2-homolog deacetylase activates the enzyme.

The protein localises to the cell membrane. Its subcellular location is the membrane raft. It carries out the reaction acetate + ATP + CoA = acetyl-CoA + AMP + diphosphate. In terms of biological role, catalyzes the conversion of acetate into acetyl-CoA (AcCoA), an essential intermediate at the junction of anabolic and catabolic pathways. AcsA undergoes a two-step reaction. In the first half reaction, AcsA combines acetate with ATP to form acetyl-adenylate (AcAMP) intermediate. In the second half reaction, it can then transfer the acetyl group from AcAMP to the sulfhydryl group of CoA, forming the product AcCoA. Has a role in growth and sporulation on acetate. This chain is Acetyl-coenzyme A synthetase (acsA), found in Bacillus subtilis (strain 168).